We begin with the raw amino-acid sequence, 449 residues long: Sensor protein QseC (449 aa).

Over 1 to 12 the chain is Cytoplasmic; that stretch reads MKLTQRLSLRVR. Residues 13–33 traverse the membrane as a helical segment; sequence LTLIFLILVSITWAISSFVAW. Residues 34–161 lie on the Periplasmic side of the membrane; the sequence is RKTTDNVDEL…REDMALAIVA (128 aa). The chain crosses the membrane as a helical span at residues 162–182; the sequence is AQLTPWLIALPFMLLILLLLL. The region spanning 183-235 is the HAMP domain; it reads HRELRPLKKLAQALRFRSPESETPLDAKGVPSEVRPLVEALNQLFSRIHSMMV. The Cytoplasmic segment spans residues 183 to 449; the sequence is HRELRPLKKL…EGGFEAVVRW (267 aa). The region spanning 243 to 449 is the Histidine kinase domain; it reads DAAHELRSPL…EGGFEAVVRW (207 aa). A Phosphohistidine; by autocatalysis modification is found at His-246.

It localises to the cell inner membrane. The enzyme catalyses ATP + protein L-histidine = ADP + protein N-phospho-L-histidine.. Member of a two-component regulatory system QseB/QseC. Activates the flagella regulon by activating transcription of FlhDC. May activate QseB by phosphorylation. In Salmonella typhi, this protein is Sensor protein QseC (qseC).